A 163-amino-acid polypeptide reads, in one-letter code: Single-stranded DNA-binding protein 2 (163 aa).

The SSB domain occupies 1–104; that stretch reads MINNVVLVGR…VVADNFQMLE (104 aa). The tract at residues 109 to 163 is disordered; the sequence is REGGSTGSFNGGFNNNTSSSNSYSAPAQQTPNFGRDDSPFGNSNPMDISDDDLPF. Over residues 119–130 the composition is skewed to low complexity; that stretch reads GGFNNNTSSSNS. Residues 131 to 140 are compositionally biased toward polar residues; the sequence is YSAPAQQTPN. The Important for interaction with partner proteins motif lies at 158–163; sequence DDDLPF.

In terms of assembly, homotetramer.

Its function is as follows. Plays an important role in DNA replication, recombination and repair. Binds to ssDNA and to an array of partner proteins to recruit them to their sites of action during DNA metabolism. This Streptococcus pyogenes serotype M18 (strain MGAS8232) protein is Single-stranded DNA-binding protein 2 (ssb2).